Here is a 473-residue protein sequence, read N- to C-terminus: 3-isopropylmalate dehydratase large subunit (473 aa).

Cys-354, Cys-414, and Cys-417 together coordinate [4Fe-4S] cluster.

It belongs to the aconitase/IPM isomerase family. LeuC type 1 subfamily. In terms of assembly, heterodimer of LeuC and LeuD. Requires [4Fe-4S] cluster as cofactor.

The catalysed reaction is (2R,3S)-3-isopropylmalate = (2S)-2-isopropylmalate. It participates in amino-acid biosynthesis; L-leucine biosynthesis; L-leucine from 3-methyl-2-oxobutanoate: step 2/4. Catalyzes the isomerization between 2-isopropylmalate and 3-isopropylmalate, via the formation of 2-isopropylmaleate. The protein is 3-isopropylmalate dehydratase large subunit of Mycobacterium marinum (strain ATCC BAA-535 / M).